Consider the following 117-residue polypeptide: Large ribosomal subunit protein bL20 (117 aa).

It belongs to the bacterial ribosomal protein bL20 family.

Its function is as follows. Binds directly to 23S ribosomal RNA and is necessary for the in vitro assembly process of the 50S ribosomal subunit. It is not involved in the protein synthesizing functions of that subunit. In Pelobacter propionicus (strain DSM 2379 / NBRC 103807 / OttBd1), this protein is Large ribosomal subunit protein bL20.